A 489-amino-acid polypeptide reads, in one-letter code: Rhamnulokinase (489 aa).

13-17 (ASSGR) serves as a coordination point for ATP. Cysteines 68 and 222 form a disulfide. Residues Gly83 and 236–238 (HDT) each bind substrate. The active-site Proton acceptor is Asp237. ATP is bound at residue Thr259. Asn296 contributes to the substrate binding site. Residue Gln304 coordinates ATP. Cysteines 353 and 370 form a disulfide. Gly402 contacts ATP. An intrachain disulfide couples Cys413 to Cys417.

It belongs to the rhamnulokinase family. Mg(2+) is required as a cofactor.

The enzyme catalyses L-rhamnulose + ATP = L-rhamnulose 1-phosphate + ADP + H(+). It functions in the pathway carbohydrate degradation; L-rhamnose degradation; glycerone phosphate from L-rhamnose: step 2/3. Involved in the catabolism of L-rhamnose (6-deoxy-L-mannose). Catalyzes the transfer of the gamma-phosphate group from ATP to the 1-hydroxyl group of L-rhamnulose to yield L-rhamnulose 1-phosphate. The chain is Rhamnulokinase from Salmonella typhimurium (strain LT2 / SGSC1412 / ATCC 700720).